The primary structure comprises 306 residues: Acetylglutamate kinase (306 aa).

Residues 75 to 76, Arg97, and Asn197 contribute to the substrate site; that span reads GG.

It belongs to the acetylglutamate kinase family. ArgB subfamily.

It is found in the cytoplasm. It carries out the reaction N-acetyl-L-glutamate + ATP = N-acetyl-L-glutamyl 5-phosphate + ADP. The protein operates within amino-acid biosynthesis; L-arginine biosynthesis; N(2)-acetyl-L-ornithine from L-glutamate: step 2/4. Functionally, catalyzes the ATP-dependent phosphorylation of N-acetyl-L-glutamate. The chain is Acetylglutamate kinase from Streptomyces coelicolor (strain ATCC BAA-471 / A3(2) / M145).